Reading from the N-terminus, the 303-residue chain is 2-(5''-triphosphoribosyl)-3'-dephosphocoenzyme-A synthase (303 aa).

Belongs to the CitG/MdcB family.

The catalysed reaction is 3'-dephospho-CoA + ATP = 2'-(5''-triphospho-alpha-D-ribosyl)-3'-dephospho-CoA + adenine. Catalyzes the formation of 2-(5''-triphosphoribosyl)-3'-dephosphocoenzyme-A, the precursor of the prosthetic group of the holo-acyl carrier protein (gamma chain) of citrate lyase, from ATP and dephospho-CoA. The chain is 2-(5''-triphosphoribosyl)-3'-dephosphocoenzyme-A synthase from Escherichia fergusonii (strain ATCC 35469 / DSM 13698 / CCUG 18766 / IAM 14443 / JCM 21226 / LMG 7866 / NBRC 102419 / NCTC 12128 / CDC 0568-73).